A 1054-amino-acid chain; its full sequence is Calcium-transporting ATPase 2, endoplasmic reticulum-type (1054 aa).

Residues 1–53 (MEEEKSFSAWSWSVEQCLKEYKTRLDKGLTSEDVQIRRQKYGFNELAKEKGKP) are Cytoplasmic-facing. The chain crosses the membrane as a helical span at residues 54–74 (LWHLVLEQFDDTLVKILLGAA). Topologically, residues 75–98 (FISFVLAFLGEEHGSGSGFEAFVE) are lumenal. The helical transmembrane segment at 99-118 (PFVIVLILILNAVVGVWQES) threads the bilayer. Residues 119-262 (NAEKALEALK…ESETPLKKKL (144 aa)) are Cytoplasmic-facing. Residues 263-282 (DEFGSRLTTAICIVCVLVWM) traverse the membrane as a helical segment. Over 283-312 (INYKNFVSWDVVDGYKPVNIKFSFEKCTYY) the chain is Lumenal. Residues 313-330 (FKIAVALAVAAIPEGLPA) form a helical membrane-spanning segment. The Ca(2+) site is built by valine 321, alanine 322, isoleucine 324, and glutamate 326. At 331 to 782 (VITTCLALGT…AEGRSIYNNM (452 aa)) the chain is on the cytoplasmic side. Aspartate 368 functions as the 4-aspartylphosphate intermediate in the catalytic mechanism. Positions 727 and 731 each coordinate Mg(2+). The helical transmembrane segment at 783–802 (KAFIRYMISSNVGEVISIFL) threads the bilayer. Ca(2+)-binding residues include asparagine 793 and glutamate 796. Residues 803-812 (TAALGIPECM) lie on the Lumenal side of the membrane. Residues 813–833 (IPVQLLWVNLVTDGPPATALG) traverse the membrane as a helical segment. Ca(2+) is bound by residues asparagine 821, threonine 824, and aspartate 825. The Cytoplasmic segment spans residues 834 to 853 (FNPADIDIMKKPPRKSDDCL). A helical transmembrane segment spans residues 854–876 (IDSWVLIRYLVIGSYVGVATVGI). The Lumenal segment spans residues 877 to 949 (FVLWYTQASF…YFTLGKVKPM (73 aa)). Residues 950 to 969 (TLSLTVLVAIEMFNSLNALS) traverse the membrane as a helical segment. Glutamate 960 is a Ca(2+) binding site. The Cytoplasmic portion of the chain corresponds to 970–982 (EDNSLLTMPPWRN). The helical transmembrane segment at 983-1001 (PWLLVAMTVSFALHCVILY) threads the bilayer. Topologically, residues 1002 to 1016 (VPFLANVFGIVPLSF) are lumenal. A helical membrane pass occupies residues 1017–1037 (REWFVVILVSFPVILIDEALK). Residues 1038-1054 (FIGRCRRTRIKKKIKTM) are Cytoplasmic-facing.

This sequence belongs to the cation transport ATPase (P-type) (TC 3.A.3) family. Type IIA subfamily.

Its subcellular location is the membrane. The catalysed reaction is Ca(2+)(in) + ATP + H2O = Ca(2+)(out) + ADP + phosphate + H(+). Its function is as follows. This magnesium-dependent enzyme catalyzes the hydrolysis of ATP coupled with the translocation of calcium from the cytosol to an endomembrane compartment. This chain is Calcium-transporting ATPase 2, endoplasmic reticulum-type (ECA2), found in Arabidopsis thaliana (Mouse-ear cress).